Reading from the N-terminus, the 182-residue chain is Large ribosomal subunit protein uL5 (182 aa).

This sequence belongs to the universal ribosomal protein uL5 family. Part of the 50S ribosomal subunit; part of the 5S rRNA/L5/L18/L25 subcomplex. Contacts the 5S rRNA and the P site tRNA. Forms a bridge to the 30S subunit in the 70S ribosome.

Functionally, this is one of the proteins that bind and probably mediate the attachment of the 5S RNA into the large ribosomal subunit, where it forms part of the central protuberance. In the 70S ribosome it contacts protein S13 of the 30S subunit (bridge B1b), connecting the 2 subunits; this bridge is implicated in subunit movement. Contacts the P site tRNA; the 5S rRNA and some of its associated proteins might help stabilize positioning of ribosome-bound tRNAs. This is Large ribosomal subunit protein uL5 from Coxiella burnetii (strain CbuG_Q212) (Coxiella burnetii (strain Q212)).